A 330-amino-acid polypeptide reads, in one-letter code: Calponin-3 (330 aa).

Lys23 is subject to N6-acetyllysine. The Calponin-homology (CH) domain maps to 26-130; the sequence is QQAEEDLRNW…TLVALAGLAK (105 aa). At Lys158 the chain carries N6-methyllysine. Calponin-like repeat units follow at residues 164–189, 204–229, and 243–268; these read IGLQ…RHLY, ISLQ…RDIY, and ISLQ…RQVY. A disordered region spans residues 279 to 330; sequence PVIHNGSQGTGTNGSEISDSDYQAEYPDEYHGEYPDEYPREYQYGDDQGIDY. The segment covering 306–318 has biased composition (basic and acidic residues); that stretch reads DEYHGEYPDEYPR.

Belongs to the calponin family.

Functionally, thin filament-associated protein that is implicated in the regulation and modulation of smooth muscle contraction. It is capable of binding to actin, calmodulin and tropomyosin. The interaction of calponin with actin inhibits the actomyosin Mg-ATPase activity. The protein is Calponin-3 (Cnn3) of Rattus norvegicus (Rat).